Consider the following 259-residue polypeptide: Probable ABC transporter arginine-binding protein ArtJ (259 aa).

Residues 1–25 (MIKQIGRFFRAFIFIMPLSLTSCES) form the signal peptide. Positions 38, 45, 96, 97, 99, 104, and 149 each coordinate L-arginine.

Belongs to the bacterial solute-binding protein 3 family.

It is found in the secreted. The protein localises to the cell surface. Probably part of an ABC transporter complex involved in arginine transport. Binds arginine. Interacts with host epithelial cells, suggesting a role in host-cell adhesion during infection. This chain is Probable ABC transporter arginine-binding protein ArtJ, found in Chlamydia pneumoniae (Chlamydophila pneumoniae).